Reading from the N-terminus, the 196-residue chain is 3-dehydroquinate dehydratase (196 aa).

3-dehydroquinate contacts are provided by residues 23-25 (ELR) and R45. The active-site Proton donor/acceptor is H98. K122 serves as the catalytic Schiff-base intermediate with substrate. Residues R159 and Q182 each contribute to the 3-dehydroquinate site.

This sequence belongs to the type-I 3-dehydroquinase family. As to quaternary structure, homodimer.

The enzyme catalyses 3-dehydroquinate = 3-dehydroshikimate + H2O. Its pathway is metabolic intermediate biosynthesis; chorismate biosynthesis; chorismate from D-erythrose 4-phosphate and phosphoenolpyruvate: step 3/7. Involved in the third step of the chorismate pathway, which leads to the biosynthesis of aromatic amino acids. Catalyzes the cis-dehydration of 3-dehydroquinate (DHQ) and introduces the first double bond of the aromatic ring to yield 3-dehydroshikimate. The chain is 3-dehydroquinate dehydratase from Archaeoglobus fulgidus (strain ATCC 49558 / DSM 4304 / JCM 9628 / NBRC 100126 / VC-16).